A 424-amino-acid polypeptide reads, in one-letter code: UDP-N-acetylglucosamine 1-carboxyvinyltransferase (424 aa).

Lysine 22 to asparagine 23 contributes to the phosphoenolpyruvate binding site. Arginine 93 is a UDP-N-acetyl-alpha-D-glucosamine binding site. The Proton donor role is filled by cysteine 117. The residue at position 117 (cysteine 117) is a 2-(S-cysteinyl)pyruvic acid O-phosphothioketal. UDP-N-acetyl-alpha-D-glucosamine contacts are provided by residues arginine 122 to leucine 126, aspartate 307, and valine 329.

The protein belongs to the EPSP synthase family. MurA subfamily.

The protein resides in the cytoplasm. The enzyme catalyses phosphoenolpyruvate + UDP-N-acetyl-alpha-D-glucosamine = UDP-N-acetyl-3-O-(1-carboxyvinyl)-alpha-D-glucosamine + phosphate. The protein operates within cell wall biogenesis; peptidoglycan biosynthesis. Functionally, cell wall formation. Adds enolpyruvyl to UDP-N-acetylglucosamine. The polypeptide is UDP-N-acetylglucosamine 1-carboxyvinyltransferase (Chlorobium luteolum (strain DSM 273 / BCRC 81028 / 2530) (Pelodictyon luteolum)).